A 98-amino-acid polypeptide reads, in one-letter code: Small ribosomal subunit protein uS19 (98 aa).

The segment at 77-98 is disordered; the sequence is TRTFRGHAGGKAEKGGSAPKKK.

The protein belongs to the universal ribosomal protein uS19 family.

In terms of biological role, protein S19 forms a complex with S13 that binds strongly to the 16S ribosomal RNA. The protein is Small ribosomal subunit protein uS19 of Chlorobium phaeobacteroides (strain DSM 266 / SMG 266 / 2430).